Consider the following 35-residue polypeptide: Photosystem II reaction center protein Psb30 (35 aa).

Residues 7 to 27 (LIANFAALALITLAGPAVIFI) form a helical membrane-spanning segment.

It belongs to the Psb30/Ycf12 family. In terms of assembly, PSII is composed of 1 copy each of membrane proteins PsbA, PsbB, PsbC, PsbD, PsbE, PsbF, PsbH, PsbI, PsbJ, PsbK, PsbL, PsbM, PsbT, PsbX, PsbY, PsbZ, Psb30/Ycf12, peripheral proteins of the oxygen-evolving complex and a large number of cofactors. It forms dimeric complexes.

Its subcellular location is the plastid. The protein resides in the organellar chromatophore thylakoid membrane. A core subunit of photosystem II (PSII), probably helps stabilize the reaction center. This Paulinella chromatophora protein is Photosystem II reaction center protein Psb30.